Here is a 186-residue protein sequence, read N- to C-terminus: Ribosome-recycling factor (186 aa).

It belongs to the RRF family.

The protein localises to the cytoplasm. Functionally, responsible for the release of ribosomes from messenger RNA at the termination of protein biosynthesis. May increase the efficiency of translation by recycling ribosomes from one round of translation to another. The sequence is that of Ribosome-recycling factor from Rhodopseudomonas palustris (strain ATCC BAA-98 / CGA009).